The chain runs to 438 residues: CBL-interacting protein kinase 32 (438 aa).

Residues 13–268 (YELGRTIGEG…IPEILEDEWF (256 aa)) enclose the Protein kinase domain. ATP is bound by residues 19–27 (IGEGTFAKV) and K42. Catalysis depends on D136, which acts as the Proton acceptor. The tract at residues 154–183 (DFGLSALSQQIKDDGLLHTTCGTPNYVAPE) is activation loop. The 25-residue stretch at 305-329 (EEPEALNAFELISMSAGLNLGNLFD) folds into the NAF domain. The PPI stretch occupies residues 335–364 (KRETRFTSKCPPKEIVRKIEEAAKPLGFDV).

This sequence belongs to the protein kinase superfamily. CAMK Ser/Thr protein kinase family. SNF1 subfamily. It depends on Mn(2+) as a cofactor.

The enzyme catalyses L-seryl-[protein] + ATP = O-phospho-L-seryl-[protein] + ADP + H(+). It carries out the reaction L-threonyl-[protein] + ATP = O-phospho-L-threonyl-[protein] + ADP + H(+). CIPK serine-threonine protein kinases interact with CBL proteins. Binding of a CBL protein to the regulatory NAF domain of CIPK protein lead to the activation of the kinase in a calcium-dependent manner. The chain is CBL-interacting protein kinase 32 (CIPK32) from Oryza sativa subsp. japonica (Rice).